The chain runs to 375 residues: Aldehyde reductase FrzD (375 aa).

FMN contacts are provided by Ala-61, Gln-103, and His-171. Tyr-176 serves as the catalytic Proton donor. The FMN site is built by Lys-223, Gly-294, and Arg-319.

It belongs to the NADH:flavin oxidoreductase/NADH oxidase family. It depends on FMN as a cofactor.

The catalysed reaction is (1S,4S)-4-[(4-hydroxyphenyl)methyl]-2,5-diazaspiro[bicyclo[3.2.1]octane-6,1'-cyclohexane]-2',5'-dien-4'-one + 2 NADPH + 2 H(+) = (1S,4S)-4-[(4-hydroxyphenyl)methyl]-2,5-diazaspiro[bicyclo[3.2.1]octane-6,1'-cyclohexan]-4'-one + 2 NADP(+). It participates in alkaloid biosynthesis; ergot alkaloid biosynthesis. Functionally, aldehyde reductase; part of the gene cluster that mediates the biosynthesis of the alkaloid (-)-FR901483, a potent immunosuppressant that shows efficacy in animal models and a probable inhibitor of purine nucleotide biosynthesis by targeting phosphoribosylpyrophosphate amidotransferase (PPAT). Within the pathway, FrzD reduces the dienone portion of the pathway intermediates to cyclohexanone. The biosynthesis of (-)-FR901483 starts with the condensation of two L-tyrosines to yield (S,S)-dityrosyl-piperazine. This process occurs in 3 steps with the non-canonical nonribosomal peptide synthetase FrzA catalyzing the reduction of L-tyrosine into L-tyrosinal, the spontaneous condensation of 2 L-tyrosinal units, and the subsequent reduction by the NmrA-like family domain-containing oxidoreductase FrzB. The cytochrome P450 monooxygenase FrzC then performs coupling between N10 and C1' to morph the piperazine into a 1,4-diazabicyclo[3.2.1]octane spiro-fused to a 2,5-cyclohexadienone. The dienone portion is further reduced to cyclohexanone by the flavin-dependent reductase FrzD. The methyltranserases (MTs) FrzE and FrzF are then involved in the methylation at the C10' amine and the C4 phenolic oxygen, respectively. The order of the two MTs appear to be interchangeable. Cleavage of the C9-N10' bond by the dioxygenase FrzG then leads to formation of a conjugated iminium. In addition to the oxidation of C9, an additional dehydrogenation between C7 and C8 can occur to give a likely shunt product. The next biosynthetic step is the intramolecular aldol condensation catalyzed by the newly identified aldolase FrzH to yield an aza-tricyclic product with the formation of a C9-C3' bond. The short-chain dehydrogenase/reductase FrzI then produces dephospho-(-)-FR901483 that is phosphorylated at C4'-OH into (-)-FR901483 by the phosphotransferase FrzJ. The only unassigned enzyme in the cluster is the second cytochrome P450 monooxygenase FrzL. The protein is Aldehyde reductase FrzD of Cladobotryum sp.